The primary structure comprises 261 residues: (R)-S-adenosyl-L-methionine hydrolase (261 aa).

Asp-12, Asp-72, and Asn-187 together coordinate adenosine. 3 residues coordinate (R)-S-adenosyl-L-methionine: Asn-187, Ser-231, and Val-239. Position 239 (Val-239) interacts with adenosine.

This sequence belongs to the SAM hydrolase / SAM-dependent halogenase family.

The enzyme catalyses (R)-S-adenosyl-L-methionine + H2O = adenosine + L-methionine + H(+). Its function is as follows. Specifically hydrolyzes (R)-S-adenosyl-L-methionine ((R)-SAM), the inactive form of the ubiquitous cofactor SAM, into adenosine and L-methionine. Is stereoselective as it cannot use the active form of SAM, (S)-S-adenosyl-L-methionine, as substrate. Likely plays a role in preventing accumulation of (R)-S-adenosyl-L-methionine in cells; maintenance of (S)-S-denosyl-L-methionine homochirality is important for cellular health given that the (R)-form is largely inactive as a methyl donor and can function as an inhibitor of methyltransferases. The protein is (R)-S-adenosyl-L-methionine hydrolase of Salinispora tropica (strain ATCC BAA-916 / DSM 44818 / JCM 13857 / NBRC 105044 / CNB-440).